A 284-amino-acid polypeptide reads, in one-letter code: 16S rRNA (guanine(1405)-N(7))-methyltransferase (284 aa).

Residues Y73, 111–113, R117, A142, D165, 191–192, L208, and Q217 each bind S-adenosyl-L-methionine; these read HAS and DL.

Belongs to the methyltransferase superfamily. Aminoglycoside resistance family.

The enzyme catalyses guanosine(1405) in 16S rRNA + S-adenosyl-L-methionine = N(7)-methylguanosine(1405) in 16S rRNA + S-adenosyl-L-homocysteine. Functionally, specifically methylates the N(7) position of guanine 1405 in 16S rRNA. Confers resistance to various aminoglycosides, including gentamicin and kanamycin. The chain is 16S rRNA (guanine(1405)-N(7))-methyltransferase (Krm) from Frankia casuarinae (strain DSM 45818 / CECT 9043 / HFP020203 / CcI3).